The chain runs to 623 residues: Xaa-Pro aminopeptidase 1 (623 aa).

R77 contributes to the a peptide binding site. At K304 the chain carries N6-acetyllysine. H395 lines the a peptide pocket. Residues D415, D426, and H489 each contribute to the Mn(2+) site. Residues H489, H498, and E523 each contribute to the a peptide site. The Mn(2+) site is built by E523 and E537.

It belongs to the peptidase M24B family. Homodimer. The cofactor is Mn(2+). As to expression, expressed in all tissues tested, including pancreas, heart, muscle, kidney, liver, lung and brain. Highest levels in pancreas.

Its subcellular location is the cytoplasm. The protein localises to the cytosol. The catalysed reaction is Release of any N-terminal amino acid, including proline, that is linked to proline, even from a dipeptide or tripeptide.. With respect to regulation, inhibited by apstatin and the metal ion chelators EDTA and 1,10-phenanthroline. Partially inhibited by dithiothreitol. Not inhibited by enalaprilat or amastatin. Specifically inhibited by the pseudodipeptide CQ31. Inhibition by CQ31 indirectly activates the CARD8 inflammasome: dipeptide accumulation following PEPD inactivation weaky inhibit dipeptidyl peptidases DDP8 and DPP9, relieving DPP8- and/or DPP9-mediated inhibition of CARD8. In terms of biological role, metalloaminopeptidase that catalyzes the removal of a penultimate prolyl residue from the N-termini of peptides, such as Arg-Pro-Pro. Contributes to the degradation of bradykinin. This is Xaa-Pro aminopeptidase 1 from Homo sapiens (Human).